A 60-amino-acid polypeptide reads, in one-letter code: Potassium channel toxin alpha-KTx 29.2 (60 aa).

Residues 1-28 (MKSVCGVLIILVVLTTMLSISTFSTVGA) form the signal peptide. Cystine bridges form between Cys-32/Cys-51, Cys-40/Cys-56, and Cys-44/Cys-58.

Belongs to the short scorpion toxin superfamily. Potassium channel inhibitor family. Alpha-KTx 29 subfamily. In terms of tissue distribution, expressed by the venom gland.

It is found in the secreted. Its function is as follows. Weakly inhibits the Kv1.3/KCNA3 channel (1 uM of thetoxin inhibits currents by 13.2%) and Kv7.1/KCNQ1 channel (10 uM of the toxin inhibits currents by 27.7%). This chain is Potassium channel toxin alpha-KTx 29.2, found in Lychas mucronatus (Chinese swimming scorpion).